The primary structure comprises 338 residues: tRNA-cytidine(32) 2-sulfurtransferase (338 aa).

Residues 86–91 (SGGKDS) carry the PP-loop motif motif. [4Fe-4S] cluster is bound by residues cysteine 161, cysteine 164, and cysteine 252.

The protein belongs to the TtcA family. As to quaternary structure, homodimer. Mg(2+) is required as a cofactor. Requires [4Fe-4S] cluster as cofactor.

It localises to the cytoplasm. The enzyme catalyses cytidine(32) in tRNA + S-sulfanyl-L-cysteinyl-[cysteine desulfurase] + AH2 + ATP = 2-thiocytidine(32) in tRNA + L-cysteinyl-[cysteine desulfurase] + A + AMP + diphosphate + H(+). Its pathway is tRNA modification. Its function is as follows. Catalyzes the ATP-dependent 2-thiolation of cytidine in position 32 of tRNA, to form 2-thiocytidine (s(2)C32). The sulfur atoms are provided by the cysteine/cysteine desulfurase (IscS) system. The polypeptide is tRNA-cytidine(32) 2-sulfurtransferase (Albidiferax ferrireducens (strain ATCC BAA-621 / DSM 15236 / T118) (Rhodoferax ferrireducens)).